Reading from the N-terminus, the 187-residue chain is Elongation factor P (187 aa).

An N6-(3,6-diaminohexanoyl)-5-hydroxylysine modification is found at lysine 34.

This sequence belongs to the elongation factor P family. Post-translationally, may be beta-lysylated on the epsilon-amino group of Lys-34 by the combined action of EpmA and EpmB, and then hydroxylated on the C5 position of the same residue by EpmC (if this protein is present). Lysylation is critical for the stimulatory effect of EF-P on peptide-bond formation. The lysylation moiety may extend toward the peptidyltransferase center and stabilize the terminal 3-CCA end of the tRNA. Hydroxylation of the C5 position on Lys-34 may allow additional potential stabilizing hydrogen-bond interactions with the P-tRNA.

It localises to the cytoplasm. It functions in the pathway protein biosynthesis; polypeptide chain elongation. Functionally, involved in peptide bond synthesis. Alleviates ribosome stalling that occurs when 3 or more consecutive Pro residues or the sequence PPG is present in a protein, possibly by augmenting the peptidyl transferase activity of the ribosome. Modification of Lys-34 is required for alleviation. This is Elongation factor P from Vesicomyosocius okutanii subsp. Calyptogena okutanii (strain HA).